Reading from the N-terminus, the 202-residue chain is Small ribosomal subunit protein uS4c (202 aa).

The interval 13 to 37 (RRPGVSPGLTSKTLKSKSNYIDRST) is disordered. Residues 20 to 37 (GLTSKTLKSKSNYIDRST) are compositionally biased toward polar residues. One can recognise an S4 RNA-binding domain in the interval 90–153 (MRLDNTIFRL…ESRSMISKNI (64 aa)).

It belongs to the universal ribosomal protein uS4 family. As to quaternary structure, part of the 30S ribosomal subunit. Contacts protein S5. The interaction surface between S4 and S5 is involved in control of translational fidelity.

The protein resides in the plastid. It localises to the chloroplast. In terms of biological role, one of the primary rRNA binding proteins, it binds directly to 16S rRNA where it nucleates assembly of the body of the 30S subunit. Functionally, with S5 and S12 plays an important role in translational accuracy. This chain is Small ribosomal subunit protein uS4c (rps4), found in Takakia lepidozioides (Moss).